The following is a 185-amino-acid chain: 4-nitrophenol 4-monooxygenase/4-nitrocatechol 2-monooxygenase, reductase component (185 aa).

Belongs to the non-flavoprotein flavin reductase family. As to quaternary structure, the 4-NP/4-NCA monooxygenase is composed of an oxygenase component NpcA and a reductase component NpcB.

The enzyme catalyses 4-nitrophenol + NADH + O2 + H(+) = 4-nitrocatechol + NAD(+) + H2O. It carries out the reaction 4-nitrocatechol + NADPH + O2 = 2-hydroxy-1,4-benzoquinone + nitrite + NADP(+) + H2O. The catalysed reaction is 4-nitrocatechol + NADH + O2 = 2-hydroxy-1,4-benzoquinone + nitrite + NAD(+) + H2O. Its pathway is aromatic compound metabolism. It functions in the pathway xenobiotic degradation. Its activity is regulated as follows. Inhibited by methimazole. Involved in the degradation of para-nitrophenol (4-NP). Catalyzes both the initial hydroxylation of 4-NP to produce 4-nitrocatechol (4-NCA) and the subsequent oxidative release of the nitro group from 4-NCA to produce 2-hydroxy-1,4-benzoquinone. It can also use 4-nitroresorcinol as substrate with a rate of nitrite release similar to that observed with the two physiological substrates, 4-PN and 4-NCA. The chain is 4-nitrophenol 4-monooxygenase/4-nitrocatechol 2-monooxygenase, reductase component (npcB) from Rhodococcus opacus (Nocardia opaca).